Reading from the N-terminus, the 267-residue chain is Hydrolase FUB4 (267 aa).

Residues Ser-93, Asp-183, and His-243 each act as charge relay system in the active site.

Belongs to the AB hydrolase 3 family.

It participates in mycotoxin biosynthesis. Hydrolase; part of the gene cluster that mediates the biosynthesis of fusaric acid, a mycotoxin with low to moderate toxicity to animals and humans, but with high phytotoxic properties. L-aspartate is suggested as fusaric acid amino acid precursor that is activated and further processed to O-acetyl-L-homoserine by cluster enzymes aspartate kinase FUB3 and homoserine O-acetyltransferase FUB5, as well as enzymes of the primary metabolism. The polyketide synthase (PKS) FUB1 generates the triketide trans-2-hexenal which is presumptively released by the hydrolase FUB4 and linked to the NRPS-bound amino acid precursor by NAD(P)-dependent dehydrogenase FUB6. FUB1, FUB4, and the non-canonical NRPS Fub8 may form an enzyme complex. Further processing of the NRPS-bound intermediate might be carried out by FUB6 and the sulfhydrylase FUB7, enabling a spontaneous electrocyclization to close the carbon backbone of fusaric acid. Dihydrofusaric acid is likely to be released via reduction by the thioester reductase (TR) domain of FUB8 whereupon the final oxidation to fusaric acid may (also) be performed by the FMN-dependent dehydrogenase FUB9. The sequence is that of Hydrolase FUB4 from Gibberella moniliformis (strain M3125 / FGSC 7600) (Maize ear and stalk rot fungus).